The chain runs to 88 residues: Parvalbumin beta 3 (88 aa).

The residue at position 1 (alanine 1) is an N-acetylalanine. Positions 31–66 constitute an EF-hand domain; sequence KSPEEVKKFFAIIDQDHSGFIEEEELKLFLQTFSAG. 7 residues coordinate Ca(2+): aspartate 44, aspartate 46, serine 48, phenylalanine 50, glutamate 52, glutamate 55, and glutamate 81.

It belongs to the parvalbumin family.

Functionally, in muscle, parvalbumin is thought to be involved in relaxation after contraction. It binds two calcium ions. In Merluccius productus (North Pacific hake), this protein is Parvalbumin beta 3.